We begin with the raw amino-acid sequence, 313 residues long: Pyrimidine-specific ribonucleoside hydrolase RihB (313 aa).

Asp11 acts as the Proton acceptor in catalysis. Ca(2+) contacts are provided by Asp11, Asp16, and Val124. Residues Gln227 and His239 each coordinate substrate. Asp240 contributes to the Ca(2+) binding site.

Belongs to the IUNH family. RihB subfamily. In terms of assembly, homotetramer. Ca(2+) serves as cofactor.

It carries out the reaction a pyrimidine ribonucleoside + H2O = a pyrimidine nucleobase + D-ribose. Functionally, hydrolyzes cytidine or uridine to ribose and cytosine or uracil, respectively. Has a clear preference for cytidine over uridine. Strictly specific for ribonucleosides. The sequence is that of Pyrimidine-specific ribonucleoside hydrolase RihB from Escherichia coli O1:K1 / APEC.